The chain runs to 696 residues: Elongation factor G (696 aa).

In terms of domain architecture, tr-type G spans 8–290; that stretch reads ERYRNIGIMA…AVLDYLPSPL (283 aa). Residues 17 to 24, 88 to 92, and 142 to 145 each bind GTP; these read AHIDAGKT, DTPGH, and NKMD.

This sequence belongs to the TRAFAC class translation factor GTPase superfamily. Classic translation factor GTPase family. EF-G/EF-2 subfamily.

It localises to the cytoplasm. In terms of biological role, catalyzes the GTP-dependent ribosomal translocation step during translation elongation. During this step, the ribosome changes from the pre-translocational (PRE) to the post-translocational (POST) state as the newly formed A-site-bound peptidyl-tRNA and P-site-bound deacylated tRNA move to the P and E sites, respectively. Catalyzes the coordinated movement of the two tRNA molecules, the mRNA and conformational changes in the ribosome. The sequence is that of Elongation factor G from Nitrosomonas eutropha (strain DSM 101675 / C91 / Nm57).